We begin with the raw amino-acid sequence, 759 residues long: Phosphoribosylformylglycinamidine synthase subunit PurL (759 aa).

H46 is a catalytic residue. Positions 49 and 88 each coordinate ATP. E90 is a Mg(2+) binding site. Residues 91–94 (SHNH) and R113 each bind substrate. H92 serves as the catalytic Proton acceptor. D114 is a binding site for Mg(2+). Q237 contacts substrate. D265 contacts Mg(2+). 309 to 311 (ESQ) is a binding site for substrate. ATP contacts are provided by D498 and G535. N536 lines the Mg(2+) pocket. S538 serves as a coordination point for substrate.

This sequence belongs to the FGAMS family. Monomer. Part of the FGAM synthase complex composed of 1 PurL, 1 PurQ and 2 PurS subunits.

It localises to the cytoplasm. It catalyses the reaction N(2)-formyl-N(1)-(5-phospho-beta-D-ribosyl)glycinamide + L-glutamine + ATP + H2O = 2-formamido-N(1)-(5-O-phospho-beta-D-ribosyl)acetamidine + L-glutamate + ADP + phosphate + H(+). It functions in the pathway purine metabolism; IMP biosynthesis via de novo pathway; 5-amino-1-(5-phospho-D-ribosyl)imidazole from N(2)-formyl-N(1)-(5-phospho-D-ribosyl)glycinamide: step 1/2. Functionally, part of the phosphoribosylformylglycinamidine synthase complex involved in the purines biosynthetic pathway. Catalyzes the ATP-dependent conversion of formylglycinamide ribonucleotide (FGAR) and glutamine to yield formylglycinamidine ribonucleotide (FGAM) and glutamate. The FGAM synthase complex is composed of three subunits. PurQ produces an ammonia molecule by converting glutamine to glutamate. PurL transfers the ammonia molecule to FGAR to form FGAM in an ATP-dependent manner. PurS interacts with PurQ and PurL and is thought to assist in the transfer of the ammonia molecule from PurQ to PurL. In Anaeromyxobacter sp. (strain K), this protein is Phosphoribosylformylglycinamidine synthase subunit PurL.